We begin with the raw amino-acid sequence, 274 residues long: 2,3,4,5-tetrahydropyridine-2,6-dicarboxylate N-succinyltransferase (274 aa).

The protein belongs to the transferase hexapeptide repeat family.

It is found in the cytoplasm. The catalysed reaction is (S)-2,3,4,5-tetrahydrodipicolinate + succinyl-CoA + H2O = (S)-2-succinylamino-6-oxoheptanedioate + CoA. The protein operates within amino-acid biosynthesis; L-lysine biosynthesis via DAP pathway; LL-2,6-diaminopimelate from (S)-tetrahydrodipicolinate (succinylase route): step 1/3. In Escherichia fergusonii (strain ATCC 35469 / DSM 13698 / CCUG 18766 / IAM 14443 / JCM 21226 / LMG 7866 / NBRC 102419 / NCTC 12128 / CDC 0568-73), this protein is 2,3,4,5-tetrahydropyridine-2,6-dicarboxylate N-succinyltransferase.